We begin with the raw amino-acid sequence, 109 residues long: MEQFEAISVEQAYLRWKEGKTALVDIRDPQSYEAGHAPGAFHLTNSSLHTFMQQTDFDQPVMVMCYHGNSSKGAAQYLLQQGFDVVYSIDGGFEAWARSYPQDITSESR.

Residues 17 to 105 (KEGKTALVDI…WARSYPQDIT (89 aa)) form the Rhodanese domain. The active-site Cysteine persulfide intermediate is Cys65.

The protein belongs to the GlpE family.

It is found in the cytoplasm. The catalysed reaction is thiosulfate + hydrogen cyanide = thiocyanate + sulfite + 2 H(+). It catalyses the reaction thiosulfate + [thioredoxin]-dithiol = [thioredoxin]-disulfide + hydrogen sulfide + sulfite + 2 H(+). In terms of biological role, transferase that catalyzes the transfer of sulfur from thiosulfate to thiophilic acceptors such as cyanide or dithiols. May function in a CysM-independent thiosulfate assimilation pathway by catalyzing the conversion of thiosulfate to sulfite, which can then be used for L-cysteine biosynthesis. This is Thiosulfate sulfurtransferase GlpE from Yersinia pestis bv. Antiqua (strain Antiqua).